The primary structure comprises 504 residues: Maturase K (504 aa).

It belongs to the intron maturase 2 family. MatK subfamily.

The protein resides in the plastid. The protein localises to the chloroplast. Usually encoded in the trnK tRNA gene intron. Probably assists in splicing its own and other chloroplast group II introns. The polypeptide is Maturase K (Impatiens capensis (Spotted jewelweed)).